A 209-amino-acid polypeptide reads, in one-letter code: A-type ATP synthase subunit D (209 aa).

Belongs to the V-ATPase D subunit family. As to quaternary structure, has multiple subunits with at least A(3), B(3), C, D, E, F, H, I and proteolipid K(x).

The protein resides in the cell membrane. Its function is as follows. Component of the A-type ATP synthase that produces ATP from ADP in the presence of a proton gradient across the membrane. This Methanoregula boonei (strain DSM 21154 / JCM 14090 / 6A8) protein is A-type ATP synthase subunit D.